Consider the following 333-residue polypeptide: Taste receptor type 2 member 38 (333 aa).

At 1–17 the chain is on the extracellular side; it reads MLTLTRIHTVSYEVRST. A helical membrane pass occupies residues 18–38; that stretch reads FLFISVLEFAVGFLTNAFVFL. Topologically, residues 39 to 55 are cytoplasmic; that stretch reads VNFWDVVKRQPLSNSDC. A helical membrane pass occupies residues 56 to 76; it reads VLLCLSISRLFLHGLLFLSAI. At 77–94 the chain is on the extracellular side; it reads QLTHFQKLSEPLNHSYQA. The chain crosses the membrane as a helical span at residues 95–115; sequence INMLWMIANQANLWLAACLSL. Residues 116-142 lie on the Cytoplasmic side of the membrane; it reads LYCSKLIRFSHTFLICLASWVSRKISQ. Residues 143–163 form a helical membrane-spanning segment; sequence MLLGIILCSCICTVLCVWCFF. Over 164–190 the chain is Extracellular; the sequence is SRPHFTVTTVLFMNNNTRLNWQIKDLN. The N-linked (GlcNAc...) asparagine glycan is linked to Asn-178. The chain crosses the membrane as a helical span at residues 191–211; sequence LFYSFLFCYLWSVPPFLLFLV. Residues 212–251 lie on the Cytoplasmic side of the membrane; the sequence is SSGMLTVSLGRHMRTMKVYTRDSRDPSLEAHIKALKSLVS. A helical membrane pass occupies residues 252–272; that stretch reads FFCFFVISSCAAFISVPLLIL. Topologically, residues 273–276 are extracellular; that stretch reads WRDK. Residues 277–297 form a helical membrane-spanning segment; the sequence is IGVMVCVGIMAACPSGHAAVL. Residues 298-333 are Cytoplasmic-facing; the sequence is ISGNAKLRRAVTTILLWAQSSLKVRADHKADSRTLC.

The protein belongs to the G-protein coupled receptor T2R family.

Its subcellular location is the membrane. Its function is as follows. Receptor that may play a role in the perception of bitterness and is gustducin-linked. May play a role in sensing the chemical composition of the gastrointestinal content. The activity of this receptor may stimulate alpha gustducin, mediate PLC-beta-2 activation and lead to the gating of TRPM5. In Pan paniscus (Pygmy chimpanzee), this protein is Taste receptor type 2 member 38 (TAS2R38).